Here is a 77-residue protein sequence, read N- to C-terminus: Acyl carrier protein (77 aa).

Positions 1-76 (MATFDDVKAV…DVVNYIDNLK (76 aa)) constitute a Carrier domain. Position 36 is an O-(pantetheine 4'-phosphoryl)serine (serine 36).

Belongs to the acyl carrier protein (ACP) family. In terms of processing, 4'-phosphopantetheine is transferred from CoA to a specific serine of apo-ACP by AcpS. This modification is essential for activity because fatty acids are bound in thioester linkage to the sulfhydryl of the prosthetic group.

It localises to the cytoplasm. It participates in lipid metabolism; fatty acid biosynthesis. Carrier of the growing fatty acid chain in fatty acid biosynthesis. The sequence is that of Acyl carrier protein from Campylobacter jejuni (strain RM1221).